Here is an 842-residue protein sequence, read N- to C-terminus: MutS protein homolog him-14 (842 aa).

The disordered stretch occupies residues 1–21 (MYSNKSFQRRQRQQVAESRSE). 588–595 (GPNMAGKS) is an ATP binding site.

This sequence belongs to the DNA mismatch repair MutS family. As to quaternary structure, heterooligomer of him-14 and msh-5.

The protein resides in the nucleus. Required during the pachytene stage of meiotic prophase for the formation of crossovers between homologous chromosomes. Together with msh-5 and zhp-3 plays a role in the activation of DNA damage-dependent apoptosis at the DNA damage checkpoint in pachytene cells. Not needed for pairing or synapsis. May promote crossing over by interfering with Holliday junction branch migration. Has no apparent role in DNA mismatch repair. The sequence is that of MutS protein homolog him-14 from Caenorhabditis elegans.